Here is a 175-residue protein sequence, read N- to C-terminus: NADH dehydrogenase [ubiquinone] 1 alpha subcomplex assembly factor 4 (175 aa).

The N-myristoyl glycine moiety is linked to residue Gly2. Phosphoserine is present on Ser35.

Belongs to the NDUFAF4 family. As to quaternary structure, binds calmodulin. Interacts with NDUFAF3. In terms of assembly, (Microbial infection) Interacts with the vesicular stomatitis virus matrix protein/M; the interaction inhibits viral propagation. Post-translationally, phosphorylated on serine. Prolactin stimulate serine phosphorylation.

It is found in the mitochondrion. The protein localises to the membrane. Its function is as follows. Involved in the assembly of mitochondrial NADH:ubiquinone oxidoreductase complex (complex I). May be involved in cell proliferation and survival of hormone-dependent tumor cells. May be a regulator of breast tumor cell invasion. The chain is NADH dehydrogenase [ubiquinone] 1 alpha subcomplex assembly factor 4 from Homo sapiens (Human).